Here is a 122-residue protein sequence, read N- to C-terminus: Large ribosomal subunit protein uL14 (122 aa).

It belongs to the universal ribosomal protein uL14 family. As to quaternary structure, part of the 50S ribosomal subunit. Forms a cluster with proteins L3 and L19. In the 70S ribosome, L14 and L19 interact and together make contacts with the 16S rRNA in bridges B5 and B8.

Its function is as follows. Binds to 23S rRNA. Forms part of two intersubunit bridges in the 70S ribosome. This Chlorobium chlorochromatii (strain CaD3) protein is Large ribosomal subunit protein uL14.